The chain runs to 981 residues: Ubiquitin carboxyl-terminal hydrolase 15 (981 aa).

A2 is modified (N-acetylalanine). The segment at 2-223 is mediates interaction with SART3; that stretch reads AEGGAADLDT…KNEDGTWPRG (222 aa). Positions 7–118 constitute a DUSP domain; that stretch reads ADLDTQRSDI…GQEPIARKVV (112 aa). The segment at 216-237 is disordered; that stretch reads EDGTWPRGPSTPKSPGASNFST. Residue T226 is modified to Phosphothreonine. Positions 226-237 are enriched in polar residues; the sequence is TPKSPGASNFST. Residues S229 and S242 each carry the phosphoserine modification. Residues 289-933 enclose the USP domain; that stretch reads CGLSNLGNTC…AAYVLFYQRQ (645 aa). Catalysis depends on C298, which acts as the Nucleophile. T602 carries the post-translational modification Phosphothreonine. The interval 633–694 is disordered; that stretch reads CCEDQNINGN…GGDNDSENGL (62 aa). Over residues 656-673 the composition is skewed to acidic residues; it reads METDEPDDESSQDQELPS. H891 acts as the Proton acceptor in catalysis. Residues 952–981 are disordered; sequence SAATGIPLESDEDSNDNDNDLENENCMHTN. The span at 960-974 shows a compositional bias: acidic residues; it reads ESDEDSNDNDNDLEN. Residues S961 and S965 each carry the phosphoserine modification.

It belongs to the peptidase C19 family. As to quaternary structure, a homodimer structure has been reported; however it is unclear whether the protein form a homodimer in vivo. Identified in a complex with the COP9 signalosome complex (CSN). Interacts with SMAD1, SMAD2 and SMAD3; the interaction is direct. Forms a complex with SMURF2 and SMAD7. Interacts with TGFBR1. Interacts with SART3; the interaction is direct. May interact with RNF20 and RNF40. May interact with PRKN. Interacts with INCA1. Phosphorylated. Phosphorylation protects against ubiquitination and subsequent degradation by the proteasome. Post-translationally, ubiquitinated, leading to degradation by the proteasome. Widely expressed with highest levels in the brain and spleen, and lowest levels in the muscles (at protein level). In the midbrain, strong expression in neurons including the dopaminergic neurons (at protein level). Widely expressed with highest levels in testis, heart and liver.

The protein resides in the cytoplasm. It is found in the nucleus. The protein localises to the mitochondrion. The enzyme catalyses Thiol-dependent hydrolysis of ester, thioester, amide, peptide and isopeptide bonds formed by the C-terminal Gly of ubiquitin (a 76-residue protein attached to proteins as an intracellular targeting signal).. Hydrolase that removes conjugated ubiquitin from target proteins and regulates various pathways such as the TGF-beta receptor signaling, NF-kappa-B and RNF41/NRDP1-PRKN pathways. Acts as a key regulator of TGF-beta receptor signaling pathway, but the precise mechanism is still unclear: according to a report, acts by promoting deubiquitination of monoubiquitinated R-SMADs (SMAD1, SMAD2 and/or SMAD3), thereby alleviating inhibition of R-SMADs and promoting activation of TGF-beta target genes. According to another reports, regulates the TGF-beta receptor signaling pathway by mediating deubiquitination and stabilization of TGFBR1, leading to an enhanced TGF-beta signal. Able to mediate deubiquitination of monoubiquitinated substrates, 'Lys-27'-, 'Lys-48'- and 'Lys-63'-linked polyubiquitin chains. May also regulate gene expression and/or DNA repair through the deubiquitination of histone H2B. Acts as an inhibitor of mitophagy by counteracting the action of parkin (PRKN): hydrolyzes cleavage of 'Lys-48'- and 'Lys-63'-linked polyubiquitin chains attached by parkin on target proteins such as MFN2, thereby reducing parkin's ability to drive mitophagy. Acts as an associated component of COP9 signalosome complex (CSN) and regulates different pathways via this association: regulates NF-kappa-B by mediating deubiquitination of NFKBIA and deubiquitinates substrates bound to VCP. Involved in endosome organization by mediating deubiquitination of SQSTM1: ubiquitinated SQSTM1 forms a molecular bridge that restrains cognate vesicles in the perinuclear region and its deubiquitination releases target vesicles for fast transport into the cell periphery. Acts as a negative regulator of antifungal immunity by mediating 'Lys-27'-linked deubiquitination of CARD9, thereby inactivating CARD9. The protein is Ubiquitin carboxyl-terminal hydrolase 15 (Usp15) of Mus musculus (Mouse).